The chain runs to 375 residues: Probable G-protein coupled receptor 34 (375 aa).

Topologically, residues 1–54 (MTTTSVDSWLCSSHGMHFITNYSDQASQNFSGVPNVTSCPMDEKLLSTVLTTFY) are extracellular. Asparagine 21, asparagine 29, and asparagine 35 each carry an N-linked (GlcNAc...) asparagine glycan. Residues 55-75 (SVIFLVGLVGNIIALYVFLGI) form a helical membrane-spanning segment. Residues 76–81 (HRKRNS) lie on the Cytoplasmic side of the membrane. Residues 82–102 (IQIYLLNVAVADLLLIFCLPF) traverse the membrane as a helical segment. The Extracellular portion of the chain corresponds to 103 to 121 (RIMYHINQNKWTLGVILCK). An intrachain disulfide couples cysteine 120 to cysteine 197. The chain crosses the membrane as a helical span at residues 122 to 142 (VVGTLFYMNMYISIILLGFIS). Over 143–164 (LDRYIKINRSIQQRRAITTKQS) the chain is Cytoplasmic. A helical membrane pass occupies residues 165 to 185 (IYVCCIVWTVALAGFLTMIIL). Topologically, residues 186 to 209 (TLKKGGHNSTMCFHYRDRHNAKGE) are extracellular. Asparagine 193 carries N-linked (GlcNAc...) asparagine glycosylation. A helical transmembrane segment spans residues 210–230 (AIFNFVLVVMFWLIFLLIILS). Topologically, residues 231-262 (YIKIGKNLLRISKRRSKFPNSGKYATTARNSF) are cytoplasmic. A helical membrane pass occupies residues 263 to 283 (IVLIIFTICFVPYHAFRFIYI). Over 284–303 (SSQLNVSSCYWKEIIHKTNE) the chain is Extracellular. Residue asparagine 288 is glycosylated (N-linked (GlcNAc...) asparagine). A helical transmembrane segment spans residues 304 to 324 (IMLVFSSFNSCLDPVMYFLMS). At 325–375 (SNIRKIMCQLLFRRFQSEASRSESTSEFKPGHSLHDLSVTVKMPQYSTKGN) the chain is on the cytoplasmic side.

Belongs to the G-protein coupled receptor 1 family. As to expression, highly expressed in glial cells such as astrocytes and microglia.

Its subcellular location is the cell membrane. Functionally, G-protein-coupled receptor of lysophosphatidylserine (LysoPS) that plays different roles in immune response. Acts a damage-sensing receptor that triggers tissue repair upon recognition of dying neutrophils. Mechanistically, apoptotic neutrophils release lysophosphatydilserine that are recognized by type 3 innate lymphoid cells (ILC3s) via GPR34, which activates downstream PI3K-AKT and RAS-ERK signaling pathways leading to STAT3 activation and IL-22 production. Plays an important role in microglial function, controlling morphology and phagocytosis. The chain is Probable G-protein coupled receptor 34 (Gpr34) from Mus musculus (Mouse).